Here is a 379-residue protein sequence, read N- to C-terminus: uncharacterized protein (379 aa).

Belongs to the herpesviridae US22 family.

This is an uncharacterized protein from Human cytomegalovirus (strain AD169) (HHV-5).